The primary structure comprises 405 residues: L-carnitine CoA-transferase (405 aa).

Positions 97 and 104 each coordinate CoA. Catalysis depends on Asp169, which acts as the Nucleophile.

The protein belongs to the CoA-transferase III family. CaiB subfamily. Homodimer.

The protein localises to the cytoplasm. The catalysed reaction is crotonobetainyl-CoA + (R)-carnitine = crotonobetaine + (R)-carnitinyl-CoA. It carries out the reaction 4-(trimethylamino)butanoyl-CoA + (R)-carnitine = (R)-carnitinyl-CoA + 4-(trimethylamino)butanoate. It functions in the pathway amine and polyamine metabolism; carnitine metabolism. Functionally, catalyzes the reversible transfer of the CoA moiety from gamma-butyrobetainyl-CoA to L-carnitine to generate L-carnitinyl-CoA and gamma-butyrobetaine. Is also able to catalyze the reversible transfer of the CoA moiety from gamma-butyrobetainyl-CoA or L-carnitinyl-CoA to crotonobetaine to generate crotonobetainyl-CoA. The polypeptide is L-carnitine CoA-transferase (Escherichia coli O127:H6 (strain E2348/69 / EPEC)).